An 89-amino-acid chain; its full sequence is Small ribosomal subunit protein uS15 (89 aa).

Belongs to the universal ribosomal protein uS15 family. Part of the 30S ribosomal subunit. Forms a bridge to the 50S subunit in the 70S ribosome, contacting the 23S rRNA.

Its function is as follows. One of the primary rRNA binding proteins, it binds directly to 16S rRNA where it helps nucleate assembly of the platform of the 30S subunit by binding and bridging several RNA helices of the 16S rRNA. Forms an intersubunit bridge (bridge B4) with the 23S rRNA of the 50S subunit in the ribosome. This is Small ribosomal subunit protein uS15 from Shewanella sp. (strain ANA-3).